The sequence spans 340 residues: Protein-arginine kinase (340 aa).

One can recognise a Phosphagen kinase C-terminal domain in the interval 14 to 244; sequence IVITTRIRLA…EQIINQENLS (231 aa). ATP contacts are provided by residues 17 to 21, His81, Arg115, 166 to 170, and 197 to 202; these read TTRIR, RASVM, and RGLWGE.

The protein belongs to the ATP:guanido phosphotransferase family.

It catalyses the reaction L-arginyl-[protein] + ATP = N(omega)-phospho-L-arginyl-[protein] + ADP + H(+). Catalyzes the specific phosphorylation of arginine residues in proteins. The polypeptide is Protein-arginine kinase (Clostridium acetobutylicum (strain ATCC 824 / DSM 792 / JCM 1419 / IAM 19013 / LMG 5710 / NBRC 13948 / NRRL B-527 / VKM B-1787 / 2291 / W)).